A 99-amino-acid chain; its full sequence is uncharacterized protein (99 aa).

This is an uncharacterized protein from Vibrio alginolyticus.